The chain runs to 441 residues: MQFDTRVLRQWNVPKLRALQRYALRRAGEDSLPQVAGSLTFTTVLSLVPILTVAFALFTAFPMFQSFRAAIEGYLFSNLVPGNISRPILTYLNQFSHNAKGLTAAGLVGLVVTSVMTMLTVENALNAIWRVRQRRPLAQRVLVFWALVSFGPVLIGASLSVSSYLVSVSAGYVAKLPYGLGVVVGLVPILLSAIAFAMLYVFVPNTLVAWRDAFLAGLVAAVAFEIAKRGFGYYVARFPTYTAVYGTFAALPIFLLWIYVSWLVTLLGATIAATLPIIRQGYWQRRAFPGSEFFDALGILLLLHRARDHAPRTLGELDIGRRLQLEADYVADLLIQLKTLHLVGKLQQDRGQAHWALLCDAHTTTLRPLYEKLVLSLPRLSRTAFAHQLGDTRVLEAQLHNPALDCTLEAVFASGEPGVVKAAAEAAAAPAAATLAASARA.

Helical transmembrane passes span 44–64 (VLSL…FPMF), 101–121 (GLTA…MLTV), 141–161 (VLVF…SLSV), 182–202 (VVVG…LYVF), 207–227 (LVAW…FEIA), and 248–268 (FAAL…TLLG).

It belongs to the UPF0761 family.

It localises to the cell inner membrane. This chain is UPF0761 membrane protein RSc1559, found in Ralstonia nicotianae (strain ATCC BAA-1114 / GMI1000) (Ralstonia solanacearum).